Here is a 235-residue protein sequence, read N- to C-terminus: Casparian strip membrane protein 2 (235 aa).

The interval 1–46 is disordered; it reads MSGSDTSGSVHVDEHGHGKASSSYDGAGAPAPAPAPFQGHRKAGSG. At 1 to 67 the chain is on the cytoplasmic side; sequence MSGSDTSGSV…GSGGDGLRRC (67 aa). Residues 68–88 traverse the membrane as a helical segment; that stretch reads LGLIDFVLRVAAFGPTLAAAI. Over 89 to 115 the chain is Extracellular; that stretch reads SIGTSDERLSVFTNYFQFRARFDDFPA. A helical transmembrane segment spans residues 116–136; the sequence is FEFFIVANAIAAGYMVLSLPF. Residues 137-150 are Cytoplasmic-facing; that stretch reads SAATIMSSKATGVK. The chain crosses the membrane as a helical span at residues 151 to 171; that stretch reads LLLLICDTIMVGLLTAAASAA. At 172–203 the chain is on the extracellular side; the sequence is AAMVYVAHEGNLRANWVPICLQFHGFCQRTSG. The helical transmembrane segment at 204–224 threads the bilayer; that stretch reads AVIASFLAVFVLMVLIVMAAF. The Cytoplasmic segment spans residues 225 to 235; sequence TMPRRTHHTAS.

Belongs to the Casparian strip membrane proteins (CASP) family. As to quaternary structure, homodimer and heterodimers.

Its subcellular location is the cell membrane. Functionally, regulates membrane-cell wall junctions and localized cell wall deposition. Required for establishment of the Casparian strip membrane domain (CSD) and the subsequent formation of Casparian strips, a cell wall modification of the root endodermis that determines an apoplastic barrier between the intraorganismal apoplasm and the extraorganismal apoplasm and prevents lateral diffusion. The protein is Casparian strip membrane protein 2 of Oryza sativa subsp. indica (Rice).